Reading from the N-terminus, the 87-residue chain is UPF0367 protein P9211_01391 (87 aa).

Belongs to the UPF0367 family.

The polypeptide is UPF0367 protein P9211_01391 (Prochlorococcus marinus (strain MIT 9211)).